The primary structure comprises 331 residues: Malate dehydrogenase (331 aa).

14-20 (GAAGSIG) is an NAD(+) binding site. Residues Arg-95 and Arg-101 each coordinate substrate. NAD(+) is bound by residues Asn-108, Gln-115, and 132–134 (VGN). Asn-134 and Arg-165 together coordinate substrate. The active-site Proton acceptor is the His-190.

The protein belongs to the LDH/MDH superfamily. MDH type 2 family.

It carries out the reaction (S)-malate + NAD(+) = oxaloacetate + NADH + H(+). Catalyzes the reversible oxidation of malate to oxaloacetate. The chain is Malate dehydrogenase from Rhodococcus jostii (strain RHA1).